A 646-amino-acid polypeptide reads, in one-letter code: Glutamine--tRNA ligase protein virJ (646 aa).

The disordered stretch occupies residues 25–65; that stretch reads NELKKRIQKRARKAAAAANRSNAQQEKGNKPAANKPAAKPE. The segment covering 38-61 has biased composition (low complexity); sequence AAAAANRSNAQQEKGNKPAANKPA. The short motif at 98-108 is the 'HIGH' region element; it reads PEPNGYLHLGH. Residues 99-101 and 105-111 each bind ATP; these read EPN and HLGHAKA. L-glutamine contacts are provided by Asp-147 and Tyr-296. ATP is bound by residues Thr-315, 344-345, and 352-354; these read RL and MSK. The 'KMSKS' region motif lies at 351 to 355; that stretch reads IMSKR.

The protein belongs to the class-I aminoacyl-tRNA synthetase family.

The enzyme catalyses tRNA(Gln) + L-glutamine + ATP = L-glutaminyl-tRNA(Gln) + AMP + diphosphate. Glutamine--tRNA ligase; part of the gene cluster that mediates the biosynthesis of virensols and trichoxide, fungal natural products that contain or are derived from a salicylaldehyde core. VirJ does not seem to play any role in virensols and trichoxide biosynthesis. The polypeptide is Glutamine--tRNA ligase protein virJ (Hypocrea virens (strain Gv29-8 / FGSC 10586) (Gliocladium virens)).